The chain runs to 71 residues: ATP synthase F(0) complex subunit e, mitochondrial (71 aa).

At lysine 34 the chain carries N6-acetyllysine. Serine 68 carries the phosphoserine modification.

The protein belongs to the ATPase e subunit family. In terms of assembly, component of the ATP synthase complex composed at least of ATP5F1A/subunit alpha, ATP5F1B/subunit beta, ATP5MC1/subunit c (homooctomer), MT-ATP6/subunit a, MT-ATP8/subunit 8, ATP5ME/subunit e, ATP5MF/subunit f, ATP5MG/subunit g, ATP5MK/subunit k, ATP5MJ/subunit j, ATP5F1C/subunit gamma, ATP5F1D/subunit delta, ATP5F1E/subunit epsilon, ATP5PF/subunit F6, ATP5PB/subunit b, ATP5PD/subunit d, ATP5PO/subunit OSCP. ATP synthase complex consists of a soluble F(1) head domain (subunits alpha(3) and beta(3)) - the catalytic core - and a membrane F(0) domain - the membrane proton channel (subunits c, a, 8, e, f, g, k and j). These two domains are linked by a central stalk (subunits gamma, delta, and epsilon) rotating inside the F1 region and a stationary peripheral stalk (subunits F6, b, d, and OSCP).

The protein localises to the mitochondrion. It is found in the mitochondrion inner membrane. Its function is as follows. Subunit e, of the mitochondrial membrane ATP synthase complex (F(1)F(0) ATP synthase or Complex V) that produces ATP from ADP in the presence of a proton gradient across the membrane which is generated by electron transport complexes of the respiratory chain. ATP synthase complex consist of a soluble F(1) head domain - the catalytic core - and a membrane F(1) domain - the membrane proton channel. These two domains are linked by a central stalk rotating inside the F(1) region and a stationary peripheral stalk. During catalysis, ATP synthesis in the catalytic domain of F(1) is coupled via a rotary mechanism of the central stalk subunits to proton translocation. In vivo, can only synthesize ATP although its ATP hydrolase activity can be activated artificially in vitro. Part of the complex F(0) domain. This is ATP synthase F(0) complex subunit e, mitochondrial from Sus scrofa (Pig).